A 209-amino-acid chain; its full sequence is Translation initiation factor IF-3 (209 aa).

The protein belongs to the IF-3 family. In terms of assembly, monomer.

Its subcellular location is the cytoplasm. Its function is as follows. IF-3 binds to the 30S ribosomal subunit and shifts the equilibrium between 70S ribosomes and their 50S and 30S subunits in favor of the free subunits, thus enhancing the availability of 30S subunits on which protein synthesis initiation begins. The sequence is that of Translation initiation factor IF-3 from Chlorobium phaeobacteroides (strain DSM 266 / SMG 266 / 2430).